The following is a 538-amino-acid chain: Probable inorganic phosphate transporter 1-4 (538 aa).

At 1 to 23 (MAGELKVLNALDSAKTQWYHFTA) the chain is on the cytoplasmic side. The chain crosses the membrane as a helical span at residues 24 to 44 (IVIAGMGFFTDAYDLFSISLV). Over 45–69 (TKLLGRIYYFNPASKSPGSLPPNVS) the chain is Extracellular. The helical transmembrane segment at 70–90 (AAVNGVAFCGTLAGQLFFGWL) threads the bilayer. At 91 to 98 (GDKMGRKK) the chain is on the cytoplasmic side. The helical transmembrane segment at 99–119 (VYGMTLMLMVICCLASGLSFG) threads the bilayer. The Extracellular segment spans residues 120–123 (SSAK). Residues 124–144 (GVMATLCFFRFWLGFGIGGDY) form a helical membrane-spanning segment. Residues 145-163 (PLSATIMSEYANKRTRGAF) are Cytoplasmic-facing. The helical transmembrane segment at 164–184 (IAAVFAMQGFGNLTGGIVAII) threads the bilayer. The Extracellular portion of the chain corresponds to 185–210 (VSAAFKARFDAPAYRDDRAGSTVPQA). A helical transmembrane segment spans residues 211-231 (DYAWRIVLMFGAIPALLTYYW). Over 232-294 (RMKMPETARY…RQFLRRHGRH (63 aa)) the chain is Cytoplasmic. Residues 295 to 315 (LLGTTVCWFVLDIAFYSSNLF) form a helical membrane-spanning segment. Residues 316 to 346 (QKDIYTAVQWLPKADTMSALEEMFKISRAQT) lie on the Extracellular side of the membrane. The chain crosses the membrane as a helical span at residues 347–367 (LVALCGTIPGYWFTVFFIDII). At 368 to 369 (GR) the chain is on the cytoplasmic side. Residues 370-390 (FVIQLGGFFFMTAFMLGLAVP) form a helical membrane-spanning segment. The Extracellular segment spans residues 391–396 (YHHWTT). Residues 397 to 417 (PGNHIGFVVMYAFTFFFANFG) form a helical membrane-spanning segment. Residues 418 to 440 (PNSTTFIVPAEIFPARLRSTCHG) lie on the Cytoplasmic side of the membrane. Residues 441–461 (ISAAAGKAGAIVGSFGFLYAA) traverse the membrane as a helical segment. Residues 462 to 481 (QSTDASKTDAGYPPGIGVRN) are Extracellular-facing. A helical membrane pass occupies residues 482-502 (SLFFLAGCNVIGFFFTFLVPE). Over 503–538 (SKGKSLEELSGENEDDDDVPEAPSTADHRTAPAPPA) the chain is Cytoplasmic. Positions 507 to 538 (SLEELSGENEDDDDVPEAPSTADHRTAPAPPA) are disordered. Positions 511 to 522 (LSGENEDDDDVP) are enriched in acidic residues.

This sequence belongs to the major facilitator superfamily. Phosphate:H(+) symporter (TC 2.A.1.9) family.

The protein resides in the membrane. In terms of biological role, high-affinity transporter for external inorganic phosphate. The sequence is that of Probable inorganic phosphate transporter 1-4 (PHT1-4) from Oryza sativa subsp. indica (Rice).